Reading from the N-terminus, the 84-residue chain is Small ribosomal subunit protein uS17 (84 aa).

This sequence belongs to the universal ribosomal protein uS17 family. Part of the 30S ribosomal subunit.

Functionally, one of the primary rRNA binding proteins, it binds specifically to the 5'-end of 16S ribosomal RNA. The sequence is that of Small ribosomal subunit protein uS17 from Borrelia duttonii (strain Ly).